Consider the following 348-residue polypeptide: Aspartate carbamoyltransferase catalytic subunit (348 aa).

Residues R57 and T58 each contribute to the carbamoyl phosphate site. K86 provides a ligand contact to L-aspartate. Residues R107, H135, and Q138 each contribute to the carbamoyl phosphate site. The L-aspartate site is built by R172 and R234. 2 residues coordinate carbamoyl phosphate: L274 and P275.

This sequence belongs to the aspartate/ornithine carbamoyltransferase superfamily. ATCase family. As to quaternary structure, heterododecamer (2C3:3R2) of six catalytic PyrB chains organized as two trimers (C3), and six regulatory PyrI chains organized as three dimers (R2).

It catalyses the reaction carbamoyl phosphate + L-aspartate = N-carbamoyl-L-aspartate + phosphate + H(+). It functions in the pathway pyrimidine metabolism; UMP biosynthesis via de novo pathway; (S)-dihydroorotate from bicarbonate: step 2/3. Functionally, catalyzes the condensation of carbamoyl phosphate and aspartate to form carbamoyl aspartate and inorganic phosphate, the committed step in the de novo pyrimidine nucleotide biosynthesis pathway. This chain is Aspartate carbamoyltransferase catalytic subunit, found in Dichelobacter nodosus (strain VCS1703A).